The primary structure comprises 551 residues: Cleavage and polyadenylation specificity factor subunit 6 (551 aa).

The necessary for interaction with NXF1 stretch occupies residues 1 to 213; it reads MADGVDHIDI…RGRFPGAVPG (213 aa). In terms of domain architecture, RRM spans 81-161; sequence IALYIGNLTW…QNPVVTPCNK (81 aa). The necessary for interaction with NUDT21/CPSF5 stretch occupies residues 81–161; sequence IALYIGNLTW…QNPVVTPCNK (81 aa). Residues 81-161 form a necessary for nuclear paraspeckles localization region; the sequence is IALYIGNLTW…QNPVVTPCNK (81 aa). The residue at position 157 (threonine 157) is a Phosphothreonine. Residues 169–180 show a composition bias toward polar residues; the sequence is MQSRKTTQSGQM. Disordered regions lie at residues 169-411 and 477-551; these read MQSR…PLSE and LHGI…YRHR. The GAR motif lies at 202 to 206; the sequence is RGRGR. The span at 207–219 shows a compositional bias: low complexity; the sequence is FPGAVPGGDRFPG. Composition is skewed to pro residues over residues 220–265, 285–366, and 377–388; these read PAGP…PLAG, GQPP…PPPT, and GPPPTDPYGRPP. A compositionally biased stretch (basic and acidic residues) spans 389–404; the sequence is PYDRGDYGPPGREMDT. Phosphothreonine is present on residues threonine 404 and threonine 407. A sufficient for nuclear speckle localization region spans residues 404–551; sequence TARTPLSEAE…RDREREYRHR (148 aa). The segment at 405 to 551 is necessary for RNA-binding; sequence ARTPLSEAEF…RDREREYRHR (147 aa). Positions 481–551 are necessary for interaction with SRSF3, SRSF7 and TRA2B/SFRS10; sequence ESKSYGSGSR…RDREREYRHR (71 aa). The span at 489-503 shows a compositional bias: basic and acidic residues; it reads SRRERSRERDHSRSR. Residues 490–551 are arg/Ser-rich domain; it reads RRERSRERDH…RDREREYRHR (62 aa). Serine 494, serine 500, serine 511, serine 513, and serine 525 each carry phosphoserine. The span at 504–514 shows a compositional bias: basic residues; the sequence is EKSRRHKSRSR. The sufficient for nuclear targeting stretch occupies residues 510–551; it reads KSRSRDRHDDYYRERSRERERHRDRDRDRDRERDREREYRHR. The span at 515–551 shows a compositional bias: basic and acidic residues; sequence DRHDDYYRERSRERERHRDRDRDRDRERDREREYRHR.

Belongs to the RRM CPSF6/7 family. In terms of assembly, component of the cleavage factor Im (CFIm) complex which is a heterotetramer composed of two subunits of NUDT21/CPSF5 and two subunits of CPSF6 or CPSF7 or a heterodimer of CPSF6 and CPSF7. The cleavage factor Im (CFIm) complex associates with the CPSF and CSTF complexes to promote the assembly of the core mRNA 3'-processing machinery. Associates with the exon junction complex (EJC). Associates with the 80S ribosome particle. Interacts (via the RRM domain) with NUDT21/CPSF5; this interaction is direct and enhances binding to RNA. Interacts (via Arg/Ser-rich domain) with FIP1L1 (preferentially via unphosphorylated form and Arg/Glu/Asp-rich domain); this interaction mediates, at least in part, the interaction between the CFIm and CPSF complexes and may be inhibited by CPSF6 hyper-phosphorylation. Interacts (via N-terminus) with NXF1; this interaction is direct. Interacts with SRSF3. Interacts with SRSF7. Interacts with SNRNP70. Interacts with TRA2B/SFRS10. Interacts with UPF1. Interacts with UPF3B. Interacts with VIRMA. Interacts (via Arg/Ser-rich domain) with TNPO3; promoting nuclear import of CPSF6 independently of its phosphorylation status. Interacts with YTHDC1. Phosphorylated. Phosphorylated in the Arg/Ser-rich domain by SRPK1, in vitro. In terms of processing, symmetrically dimethylated on arginine residues in the GAR motif by PRMT5 in a WDR77- and CLNS1A-dependent manner. Asymmetrically dimethylated on arginine residues in the GAR motif by PRMT1.

It is found in the nucleus. Its subcellular location is the nucleoplasm. It localises to the nucleus speckle. The protein localises to the cytoplasm. Functionally, component of the cleavage factor Im (CFIm) complex that functions as an activator of the pre-mRNA 3'-end cleavage and polyadenylation processing required for the maturation of pre-mRNA into functional mRNAs. CFIm contributes to the recruitment of multiprotein complexes on specific sequences on the pre-mRNA 3'-end, so called cleavage and polyadenylation signals (pA signals). Most pre-mRNAs contain multiple pA signals, resulting in alternative cleavage and polyadenylation (APA) producing mRNAs with variable 3'-end formation. The CFIm complex acts as a key regulator of cleavage and polyadenylation site choice during APA through its binding to 5'-UGUA-3' elements localized in the 3'-untranslated region (UTR) for a huge number of pre-mRNAs. CPSF6 enhances NUDT21/CPSF5 binding to 5'-UGUA-3' elements localized upstream of pA signals and promotes RNA looping, and hence activates directly the mRNA 3'-processing machinery. Plays a role in mRNA export. This Bos taurus (Bovine) protein is Cleavage and polyadenylation specificity factor subunit 6.